Consider the following 857-residue polypeptide: uncharacterized protein (857 aa).

4 disordered regions span residues 316 to 339, 484 to 561, 619 to 777, and 809 to 836; these read PPAP…TKEN, AKQP…PRTN, GQFP…PKPQ, and EQRP…STGK. Composition is skewed to basic and acidic residues over residues 324–339, 518–534, and 630–640; these read PENK…TKEN, KKTE…KAEE, and QRAESSIDKDC. The segment covering 683–700 has biased composition (polar residues); that stretch reads RTTTVQPHSHSAQPTTLR. Positions 708–725 are enriched in low complexity; the sequence is SSSLIASAKPAPPISSSS. Residues 726-738 show a composition bias toward polar residues; the sequence is TGPNVTNPNQSSA. Over residues 809–828 the composition is skewed to basic and acidic residues; the sequence is EQRPEREAMKRQAQQERENA.

This is an uncharacterized protein from Mus musculus (Mouse).